A 153-amino-acid polypeptide reads, in one-letter code: Nucleoside diphosphate kinase (153 aa).

Residues lysine 13, phenylalanine 61, arginine 89, threonine 95, arginine 106, and asparagine 116 each coordinate ATP. Residue histidine 119 is the Pros-phosphohistidine intermediate of the active site.

This sequence belongs to the NDK family. Mg(2+) serves as cofactor. Highest levels in the liver and kidney with lower levels in the heart, brain and breast muscle.

Its subcellular location is the cytoplasm. The protein localises to the cell membrane. The catalysed reaction is a 2'-deoxyribonucleoside 5'-diphosphate + ATP = a 2'-deoxyribonucleoside 5'-triphosphate + ADP. It carries out the reaction a ribonucleoside 5'-diphosphate + ATP = a ribonucleoside 5'-triphosphate + ADP. Major role in the synthesis of nucleoside triphosphates other than ATP. The ATP gamma phosphate is transferred to the NDP beta phosphate via a ping-pong mechanism, using a phosphorylated active-site intermediate. This chain is Nucleoside diphosphate kinase, found in Columba livia (Rock dove).